Here is a 939-residue protein sequence, read N- to C-terminus: Translation initiation factor IF-2 (939 aa).

Residues 81–94 are compositionally biased toward basic and acidic residues; it reads EEQSRKAYEKEQQL. 2 disordered regions span residues 81 to 303 and 316 to 337; these read EEQS…KKVE and TISG…KMRR. Residues 99-108 are compositionally biased toward low complexity; sequence SSAPSPAPAA. Basic and acidic residues-rich tracts occupy residues 112–127 and 148–173; these read EPVK…RHEP and SPKE…EKAA. The span at 178-189 shows a compositional bias: low complexity; that stretch reads EAQPEAQSQQEP. Over residues 244 to 255 the composition is skewed to basic and acidic residues; sequence FKENAAELKDEF. Positions 276-287 are enriched in low complexity; that stretch reads AAGEGESTTGGE. The span at 292-301 shows a compositional bias: basic residues; that stretch reads KKKKGKKKKK. Low complexity predominate over residues 318-328; that stretch reads SGMDDSGSSGS. In terms of domain architecture, tr-type G spans 436–606; it reads TRPPVVTIMG…LTEAEVRELK (171 aa). A G1 region spans residues 445–452; the sequence is GHVDHGKT. Residue 445-452 coordinates GTP; it reads GHVDHGKT. The G2 stretch occupies residues 470 to 474; sequence GITQH. The tract at residues 492 to 495 is G3; it reads DTPG. Residues 492-496 and 546-549 contribute to the GTP site; these read DTPGH and NKID. The tract at residues 546 to 549 is G4; it reads NKID. A G5 region spans residues 582-584; it reads SAK.

It belongs to the TRAFAC class translation factor GTPase superfamily. Classic translation factor GTPase family. IF-2 subfamily.

Its subcellular location is the cytoplasm. Functionally, one of the essential components for the initiation of protein synthesis. Protects formylmethionyl-tRNA from spontaneous hydrolysis and promotes its binding to the 30S ribosomal subunits. Also involved in the hydrolysis of GTP during the formation of the 70S ribosomal complex. This chain is Translation initiation factor IF-2, found in Chlorobaculum parvum (strain DSM 263 / NCIMB 8327) (Chlorobium vibrioforme subsp. thiosulfatophilum).